The primary structure comprises 602 residues: Sulfite reductase [NADPH] hemoprotein beta-component (602 aa).

Residues 1–23 (MDDTKTASPAPARAYETPPAERP) form a disordered region. Residues Cys458, Cys464, Cys503, and Cys507 each coordinate [4Fe-4S] cluster. Residue Cys507 coordinates siroheme.

It belongs to the nitrite and sulfite reductase 4Fe-4S domain family. As to quaternary structure, alpha(8)-beta(8). The alpha component is a flavoprotein, the beta component is a hemoprotein. Siroheme serves as cofactor. The cofactor is [4Fe-4S] cluster.

The catalysed reaction is hydrogen sulfide + 3 NADP(+) + 3 H2O = sulfite + 3 NADPH + 4 H(+). It functions in the pathway sulfur metabolism; hydrogen sulfide biosynthesis; hydrogen sulfide from sulfite (NADPH route): step 1/1. Component of the sulfite reductase complex that catalyzes the 6-electron reduction of sulfite to sulfide. This is one of several activities required for the biosynthesis of L-cysteine from sulfate. The chain is Sulfite reductase [NADPH] hemoprotein beta-component from Methylobacterium sp. (strain 4-46).